We begin with the raw amino-acid sequence, 234 residues long: 7-cyano-7-deazaguanine synthase (234 aa).

ATP is bound at residue phenylalanine 8–alanine 18. Zn(2+) contacts are provided by cysteine 194, cysteine 202, cysteine 205, and cysteine 208.

It belongs to the QueC family. Zn(2+) serves as cofactor.

The enzyme catalyses 7-carboxy-7-deazaguanine + NH4(+) + ATP = 7-cyano-7-deazaguanine + ADP + phosphate + H2O + H(+). The protein operates within purine metabolism; 7-cyano-7-deazaguanine biosynthesis. Functionally, catalyzes the ATP-dependent conversion of 7-carboxy-7-deazaguanine (CDG) to 7-cyano-7-deazaguanine (preQ(0)). This Gloeobacter violaceus (strain ATCC 29082 / PCC 7421) protein is 7-cyano-7-deazaguanine synthase.